We begin with the raw amino-acid sequence, 357 residues long: IGF-like family receptor 1 (357 aa).

The signal sequence occupies residues 1-22 (MGPLRLLPTAVLLLAQAAPWEA). Residues 23 to 160 (SQHCGRLEYW…HKAPQQAWPS (138 aa)) are Extracellular-facing. The segment at 100–147 (IPSGSRGGTGRPCREPVPNKEPCPLTPGKSSILSSQEPSSPGIPSVSW) is disordered. Residues 129-139 (SSILSSQEPSS) are compositionally biased toward low complexity. The chain crosses the membrane as a helical span at residues 161–181 (LSFALFLVLVLLVTSAIILLA). The Cytoplasmic segment spans residues 182-357 (LQRHHRRLDQ…KLGSSGACLA (176 aa)).

Its subcellular location is the cell membrane. In terms of biological role, probable cell membrane receptor for the IGF-like family protein IGFL. This Bos taurus (Bovine) protein is IGF-like family receptor 1 (IGFLR1).